We begin with the raw amino-acid sequence, 497 residues long: uncharacterized protein (497 aa).

Polar residues predominate over residues Met-1–Gln-16. The segment at Met-1–Thr-29 is disordered. Residue Ser-64 is modified to Phosphoserine. A run of 6 helical transmembrane segments spans residues Ile-86–Ile-106, Phe-120–Leu-140, Phe-155–Ala-175, Trp-180–Tyr-200, Leu-222–Ala-242, and Ala-258–Phe-278. Ser-295 is modified (phosphoserine). The next 6 membrane-spanning stretches (helical) occupy residues Phe-309–Gln-329, Gly-348–Leu-368, Ile-377–Ala-397, Phe-407–Leu-427, Val-443–Phe-463, and Val-468–Leu-488.

The protein resides in the membrane. This is an uncharacterized protein from Schizosaccharomyces pombe (strain 972 / ATCC 24843) (Fission yeast).